Here is a 700-residue protein sequence, read N- to C-terminus: Acyl-coenzyme A oxidase 3 (700 aa).

The protein belongs to the acyl-CoA oxidase family. Heteropentamer composed of five different subunits. It depends on FAD as a cofactor.

The protein resides in the peroxisome. It carries out the reaction a 2,3-saturated acyl-CoA + O2 = a (2E)-enoyl-CoA + H2O2. The protein operates within lipid metabolism; peroxisomal fatty acid beta-oxidation. In terms of biological role, oxidizes aliphatic acyl-CoA substrates of different chain lengths such as hexanoyl-CoA, decanoyl-CoA and myristoyl-CoA as well as aromatic/heterocyclic ring-substituted chromogenic substrates, such as furylpropionyl-CoA. Of the above substrates, the efficiency of the enzyme, exhibits the following order: decanoyl-CoA &gt; myristoyl-CoA &gt; hexanoyl-CoA &gt; furyl-propionyl-CoA. The polypeptide is Acyl-coenzyme A oxidase 3 (POX3) (Yarrowia lipolytica (strain CLIB 122 / E 150) (Yeast)).